A 314-amino-acid polypeptide reads, in one-letter code: Lipoyl synthase (314 aa).

[4Fe-4S] cluster is bound by residues Cys-67, Cys-72, Cys-78, Cys-93, Cys-97, Cys-100, and Ser-306. Residues Phe-79–Lys-295 form the Radical SAM core domain.

Belongs to the radical SAM superfamily. Lipoyl synthase family. The cofactor is [4Fe-4S] cluster.

Its subcellular location is the cytoplasm. It carries out the reaction [[Fe-S] cluster scaffold protein carrying a second [4Fe-4S](2+) cluster] + N(6)-octanoyl-L-lysyl-[protein] + 2 oxidized [2Fe-2S]-[ferredoxin] + 2 S-adenosyl-L-methionine + 4 H(+) = [[Fe-S] cluster scaffold protein] + N(6)-[(R)-dihydrolipoyl]-L-lysyl-[protein] + 4 Fe(3+) + 2 hydrogen sulfide + 2 5'-deoxyadenosine + 2 L-methionine + 2 reduced [2Fe-2S]-[ferredoxin]. It participates in protein modification; protein lipoylation via endogenous pathway; protein N(6)-(lipoyl)lysine from octanoyl-[acyl-carrier-protein]: step 2/2. Functionally, catalyzes the radical-mediated insertion of two sulfur atoms into the C-6 and C-8 positions of the octanoyl moiety bound to the lipoyl domains of lipoate-dependent enzymes, thereby converting the octanoylated domains into lipoylated derivatives. In Buchnera aphidicola subsp. Baizongia pistaciae (strain Bp), this protein is Lipoyl synthase.